The primary structure comprises 530 residues: Light-independent protochlorophyllide reductase subunit B (530 aa).

Residue D36 coordinates [4Fe-4S] cluster. D287 serves as the catalytic Proton donor. 422–423 (GL) provides a ligand contact to substrate. A disordered region spans residues 453-472 (PAVQTASSEPQPSAIETPSA). Over residues 454-463 (AVQTASSEPQ) the composition is skewed to polar residues.

The protein belongs to the ChlB/BchB/BchZ family. As to quaternary structure, protochlorophyllide reductase is composed of three subunits; BchL, BchN and BchB. Forms a heterotetramer of two BchB and two BchN subunits. It depends on [4Fe-4S] cluster as a cofactor.

It carries out the reaction chlorophyllide a + oxidized 2[4Fe-4S]-[ferredoxin] + 2 ADP + 2 phosphate = protochlorophyllide a + reduced 2[4Fe-4S]-[ferredoxin] + 2 ATP + 2 H2O. It functions in the pathway porphyrin-containing compound metabolism; bacteriochlorophyll biosynthesis (light-independent). In terms of biological role, component of the dark-operative protochlorophyllide reductase (DPOR) that uses Mg-ATP and reduced ferredoxin to reduce ring D of protochlorophyllide (Pchlide) to form chlorophyllide a (Chlide). This reaction is light-independent. The NB-protein (BchN-BchB) is the catalytic component of the complex. The sequence is that of Light-independent protochlorophyllide reductase subunit B from Rhodopseudomonas palustris (strain BisB18).